Consider the following 225-residue polypeptide: MDVVFALGGSVLMPKEGASTENIQNYAKAFKKLKEMGHRVSVVVGGGNTARQYISVAREFTNESFCDEIGILATRMNSMLLISALGKDAVKQVPENFKDAELILNMDKILVMGGTHPAHTTDAVSATLAEFIDADLLVIATNVDGVYTKDPRCNEDAVKLDKINTKELLEITGSSSMSAGSSGVVDPLASKIIDRAELKTIVVKGIPEEILASVSGDHNGTTITP.

9 to 10 contacts ATP; the sequence is GS. G46 provides a ligand contact to UMP. Residues G47 and R51 each contribute to the ATP site. UMP is bound by residues D67 and 115 to 121; that span reads THPAHTT. T141, N142, Y147, and D150 together coordinate ATP.

Belongs to the UMP kinase family. As to quaternary structure, homohexamer.

The protein localises to the cytoplasm. The enzyme catalyses UMP + ATP = UDP + ADP. The protein operates within pyrimidine metabolism; CTP biosynthesis via de novo pathway; UDP from UMP (UMPK route): step 1/1. Inhibited by UTP. In terms of biological role, catalyzes the reversible phosphorylation of UMP to UDP. The polypeptide is Uridylate kinase (Methanococcus maripaludis (strain C5 / ATCC BAA-1333)).